Consider the following 1087-residue polypeptide: MIMSQKPFDLEGYRKYITEKVREAFNVAQEARAKGLDVSDHVEIPLASDMAERIEALIGIKGIAQEIRDLSSRMSREEVSLEMSRRIAAMFKDNRKEALDKAIRVGLAILTEGILVAPLEGIADVYIGKNQDGSEYVGISYAGPIRGAGGTAQALSVLIGDVVRRELGISRFQPTEDEIERYIEEIESYDRIKHLQYMPTPDEIKLVVRNSPICIDGEGSEEEEVSGHRDMERIKTNRIRGGMCLVLCEGLVQKARKILKYTSSMHLDDWNFLANLGGKAEGKSSKKSDKFLKDIVAGRPVFSHPSRPGGFRLRYGRSRVSGLAAASLNPATMYIMGKFIAIGSQIKVELPGKAAAVTPCDTIDGPTVLLKNGDHVKINDIEKAREVYDDVVEITDAGEILIAYGDFLENNYPLPTPSFTVEWWEQYLPDGVNAKDIDQFSAVEISRKYGIPLHPYYDYYWHDISFEDLEFLVKNAEQWSITEDGMRVPYPAFDVFIRLGIEFRRSGDYLIIRDYYPLLISLGYDVRNGKIVNVKKYERKGSVMETVNYLSGLIIKPRAPTRVGSRLGRPEKAGDRKMKPMVHSLFPVESYGEARRSIIGANKNSEGSYKAEVFFYRCNSCGFETPTPVCPRCGGHCSPLGEKTGSIDLESILNRAESILGISLDSLKEFKGVKKLMSKEKVAEPIEKGILRAVHDISVNKDGTCRFDMSDIPITHFRYREIGIDERTLADLGYEVRDVNELFPQDVIIPRKAAKYLFNVSRFIDDLLVKYYNMPPFYSLESEEDLIGHLIIGLAPHTSGGVVGRIIGFSDVNAFYAHPFFHAAKRRNCDGDEDSVMLLMDGFLNFSARYLPSTRGGLMDAPLVLSVLINPDEIDKEALNVDTLSRYPVLFYEAAERHASPAEIEDTMMTMKVRIKKTGTYMGSSYTMDTSDINSGVLVSSYKTLGTMDEKINEQLGLAKKLRAVDADDVAARVISTHFLPDMYGNFRKFFSQEFRCTKCNAKYRRIPLSGRCQKCGSTSLTLTIHKGSVVKYLNETLKIAENYRLPDYLKARIDNLARTIKETFPDTEEEEKPEPREVKITGLDMY.

Belongs to the archaeal DNA polymerase II family. In terms of assembly, heterodimer of a large subunit and a small subunit.

It carries out the reaction DNA(n) + a 2'-deoxyribonucleoside 5'-triphosphate = DNA(n+1) + diphosphate. The catalysed reaction is Exonucleolytic cleavage in the 3'- to 5'-direction to yield nucleoside 5'-phosphates.. In terms of biological role, possesses two activities: a DNA synthesis (polymerase) and an exonucleolytic activity that degrades single-stranded DNA in the 3'- to 5'-direction. Has a template-primer preference which is characteristic of a replicative DNA polymerase. The protein is DNA polymerase II large subunit (polC) of Thermoplasma acidophilum (strain ATCC 25905 / DSM 1728 / JCM 9062 / NBRC 15155 / AMRC-C165).